A 115-amino-acid polypeptide reads, in one-letter code: Ribonuclease P protein component (115 aa).

This sequence belongs to the RnpA family. In terms of assembly, consists of a catalytic RNA component (M1 or rnpB) and a protein subunit.

It carries out the reaction Endonucleolytic cleavage of RNA, removing 5'-extranucleotides from tRNA precursor.. Its function is as follows. RNaseP catalyzes the removal of the 5'-leader sequence from pre-tRNA to produce the mature 5'-terminus. It can also cleave other RNA substrates such as 4.5S RNA. The protein component plays an auxiliary but essential role in vivo by binding to the 5'-leader sequence and broadening the substrate specificity of the ribozyme. The chain is Ribonuclease P protein component from Bacillus cereus (strain B4264).